Here is an 85-residue protein sequence, read N- to C-terminus: Phosphocarrier protein HPr (85 aa).

Residues 1–85 (MFQRDIKITT…DLAKFLTTLK (85 aa)) form the HPr domain. His-15 serves as the catalytic Pros-phosphohistidine intermediate.

Belongs to the HPr family.

Its subcellular location is the cytoplasm. Functionally, general (non sugar-specific) component of the phosphoenolpyruvate-dependent sugar phosphotransferase system (sugar PTS). This major carbohydrate active-transport system catalyzes the phosphorylation of incoming sugar substrates concomitantly with their translocation across the cell membrane. The phosphoryl group from phosphoenolpyruvate (PEP) is transferred to the phosphoryl carrier protein HPr by enzyme I. Phospho-HPr then transfers it to the PTS EIIA domain. In Buchnera aphidicola subsp. Baizongia pistaciae (strain Bp), this protein is Phosphocarrier protein HPr (ptsH).